The following is a 269-amino-acid chain: 2-dehydro-3-deoxyphosphooctonate aldolase (269 aa).

The protein belongs to the KdsA family.

It localises to the cytoplasm. The enzyme catalyses D-arabinose 5-phosphate + phosphoenolpyruvate + H2O = 3-deoxy-alpha-D-manno-2-octulosonate-8-phosphate + phosphate. Its pathway is carbohydrate biosynthesis; 3-deoxy-D-manno-octulosonate biosynthesis; 3-deoxy-D-manno-octulosonate from D-ribulose 5-phosphate: step 2/3. It participates in bacterial outer membrane biogenesis; lipopolysaccharide biosynthesis. This is 2-dehydro-3-deoxyphosphooctonate aldolase from Chlamydia trachomatis serovar L2 (strain ATCC VR-902B / DSM 19102 / 434/Bu).